A 98-amino-acid polypeptide reads, in one-letter code: NADH-ubiquinone oxidoreductase chain 4L (98 aa).

A run of 3 helical transmembrane segments spans residues 1 to 21 (MSMV…GMLV), 29 to 49 (SLLC…VTIL), and 61 to 81 (IVLL…LVMV).

The protein belongs to the complex I subunit 4L family. Core subunit of respiratory chain NADH dehydrogenase (Complex I) which is composed of 45 different subunits.

The protein resides in the mitochondrion inner membrane. It carries out the reaction a ubiquinone + NADH + 5 H(+)(in) = a ubiquinol + NAD(+) + 4 H(+)(out). Core subunit of the mitochondrial membrane respiratory chain NADH dehydrogenase (Complex I) which catalyzes electron transfer from NADH through the respiratory chain, using ubiquinone as an electron acceptor. Part of the enzyme membrane arm which is embedded in the lipid bilayer and involved in proton translocation. The chain is NADH-ubiquinone oxidoreductase chain 4L (MT-ND4L) from Vulpes vulpes (Red fox).